A 250-amino-acid chain; its full sequence is Sulfate transporter CysZ (250 aa).

4 helical membrane-spanning segments follow: residues 27–47, 64–84, 150–170, and 210–230; these read FVVL…YYLF, FLSW…LATF, FLLL…WFLF, and MLVA…PVAV.

Belongs to the CysZ family.

The protein localises to the cell inner membrane. High affinity, high specificity proton-dependent sulfate transporter, which mediates sulfate uptake. Provides the sulfur source for the cysteine synthesis pathway. In Vibrio cholerae serotype O1 (strain ATCC 39315 / El Tor Inaba N16961), this protein is Sulfate transporter CysZ.